The sequence spans 150 residues: Probable NADH dehydrogenase [ubiquinone] 1 alpha subcomplex subunit 5 (150 aa).

This sequence belongs to the complex I NDUFA5 subunit family. As to quaternary structure, complex I is composed of 45 different subunits.

The protein localises to the mitochondrion inner membrane. Accessory subunit of the mitochondrial membrane respiratory chain NADH dehydrogenase (Complex I), that is believed not to be involved in catalysis. Complex I functions in the transfer of electrons from NADH to the respiratory chain. The immediate electron acceptor for the enzyme is believed to be ubiquinone. This chain is Probable NADH dehydrogenase [ubiquinone] 1 alpha subcomplex subunit 5, found in Caenorhabditis elegans.